The primary structure comprises 151 residues: Transcriptional regulator MraZ (151 aa).

2 SpoVT-AbrB domains span residues 5-52 (ANAI…PLDE) and 81-124 (AVDL…DEDA).

It belongs to the MraZ family. As to quaternary structure, forms oligomers.

It localises to the cytoplasm. It is found in the nucleoid. The polypeptide is Transcriptional regulator MraZ (Pseudomonas fluorescens (strain Pf0-1)).